A 229-amino-acid chain; its full sequence is UPF0758 protein Cbei_0490 (229 aa).

The region spanning 107 to 229 (KITSPKDLAS…FVSLKERGLI (123 aa)) is the MPN domain. 3 residues coordinate Zn(2+): His178, His180, and Asp191. The JAMM motif signature appears at 178 to 191 (HNHPSGDPTPSRED).

Belongs to the UPF0758 family.

The sequence is that of UPF0758 protein Cbei_0490 from Clostridium beijerinckii (strain ATCC 51743 / NCIMB 8052) (Clostridium acetobutylicum).